The sequence spans 370 residues: Quinolinate synthase (370 aa).

Positions 62 and 83 each coordinate iminosuccinate. Cys128 contacts [4Fe-4S] cluster. Residues 154 to 156 (YAN) and Ser171 contribute to the iminosuccinate site. Position 215 (Cys215) interacts with [4Fe-4S] cluster. Residues 241 to 243 (HPE) and Thr258 each bind iminosuccinate. Cys312 lines the [4Fe-4S] cluster pocket.

The protein belongs to the quinolinate synthase family. Type 1 subfamily. [4Fe-4S] cluster is required as a cofactor.

The protein resides in the cytoplasm. The catalysed reaction is iminosuccinate + dihydroxyacetone phosphate = quinolinate + phosphate + 2 H2O + H(+). It participates in cofactor biosynthesis; NAD(+) biosynthesis; quinolinate from iminoaspartate: step 1/1. Its function is as follows. Catalyzes the condensation of iminoaspartate with dihydroxyacetone phosphate to form quinolinate. This Neisseria meningitidis serogroup A / serotype 4A (strain DSM 15465 / Z2491) protein is Quinolinate synthase.